Consider the following 403-residue polypeptide: Argininosuccinate synthase (403 aa).

ATP-binding positions include 13 to 21 (AYSGGLDTS) and A40. L-citrulline-binding residues include Y91 and S96. G121 is a binding site for ATP. Residues T123, N127, and D128 each contribute to the L-aspartate site. N127 contacts L-citrulline. Positions 131, 180, 189, 265, and 277 each coordinate L-citrulline.

Belongs to the argininosuccinate synthase family. Type 1 subfamily. Homotetramer.

It localises to the cytoplasm. The catalysed reaction is L-citrulline + L-aspartate + ATP = 2-(N(omega)-L-arginino)succinate + AMP + diphosphate + H(+). The protein operates within amino-acid biosynthesis; L-arginine biosynthesis; L-arginine from L-ornithine and carbamoyl phosphate: step 2/3. The sequence is that of Argininosuccinate synthase from Leptospira borgpetersenii serovar Hardjo-bovis (strain JB197).